The sequence spans 123 residues: Large ribosomal subunit protein bL12 (123 aa).

It belongs to the bacterial ribosomal protein bL12 family. As to quaternary structure, homodimer. Part of the ribosomal stalk of the 50S ribosomal subunit. Forms a multimeric L10(L12)X complex, where L10 forms an elongated spine to which 2 to 4 L12 dimers bind in a sequential fashion. Binds GTP-bound translation factors.

Its function is as follows. Forms part of the ribosomal stalk which helps the ribosome interact with GTP-bound translation factors. Is thus essential for accurate translation. The chain is Large ribosomal subunit protein bL12 from Aliarcobacter butzleri (strain RM4018) (Arcobacter butzleri).